We begin with the raw amino-acid sequence, 220 residues long: uncharacterized protein (220 aa).

The segment at 194–220 (DQSQQQATKSNSKTKKLKGNHGEKTKI) is disordered. Polar residues predominate over residues 195–204 (QSQQQATKSN).

This is an uncharacterized protein from Borreliella burgdorferi (strain ATCC 35210 / DSM 4680 / CIP 102532 / B31) (Borrelia burgdorferi).